A 99-amino-acid polypeptide reads, in one-letter code: Ubiquitin-related modifier 1 (99 aa).

The residue at position 99 (Gly99) is a 1-thioglycine. Gly99 participates in a covalent cross-link: Glycyl lysine isopeptide (Gly-Lys) (interchain with K-? in acceptor proteins).

It belongs to the URM1 family. Post-translationally, C-terminal thiocarboxylation occurs in 2 steps, it is first acyl-adenylated (-COAMP) via the hesA/moeB/thiF part of UBA4, then thiocarboxylated (-COSH) via the rhodanese domain of UBA4.

It localises to the cytoplasm. The protein operates within tRNA modification; 5-methoxycarbonylmethyl-2-thiouridine-tRNA biosynthesis. In terms of biological role, acts as a sulfur carrier required for 2-thiolation of mcm(5)S(2)U at tRNA wobble positions of cytosolic tRNA(Lys), tRNA(Glu) and tRNA(Gln). Serves as sulfur donor in tRNA 2-thiolation reaction by being thiocarboxylated (-COSH) at its C-terminus by the MOCS3 homolog UBA4. The sulfur is then transferred to tRNA to form 2-thiolation of mcm(5)S(2)U. Prior mcm(5) tRNA modification by the elongator complex is required for 2-thiolation. Also acts as a ubiquitin-like protein (UBL) that is covalently conjugated via an isopeptide bond to lysine residues of target proteins such as AHP1. The thiocarboxylated form serves as substrate for conjugation and oxidative stress specifically induces the formation of UBL-protein conjugates. In Yarrowia lipolytica (strain CLIB 122 / E 150) (Yeast), this protein is Ubiquitin-related modifier 1.